We begin with the raw amino-acid sequence, 486 residues long: RAC-beta serine/threonine-protein kinase A (486 aa).

Residues 5–110 (MVIKEGWLQK…WIIAIQTVAN (106 aa)) enclose the PH domain. Residues Ser133 and Ser136 are each glycosylated (O-linked (GlcNAc) serine). The region spanning 157-414 (FDYLKLLGKG…AQEVMSHRFF (258 aa)) is the Protein kinase domain. ATP-binding positions include 163-171 (LGKGTFGKV) and Lys186. Residue Asp280 is the Proton acceptor of the active site. Residue Thr311 is glycosylated (O-linked (GlcNAc) threonine). Thr314 is subject to Phosphothreonine. Residue Thr318 is glycosylated (O-linked (GlcNAc) threonine). In terms of domain architecture, AGC-kinase C-terminal spans 415 to 486 (VSINWQDVTE…QFSYSASIRE (72 aa)). The tract at residues 455–486 (LTPPDRYDNLDALESDQRPHFPQFSYSASIRE) is disordered. The span at 459 to 473 (DRYDNLDALESDQRP) shows a compositional bias: basic and acidic residues. Phosphoserine is present on Ser479. O-linked (GlcNAc) serine; alternate glycosylation occurs at Ser479.

This sequence belongs to the protein kinase superfamily. AGC Ser/Thr protein kinase family. RAC subfamily. In terms of processing, phosphorylation on Thr-314 and Ser-479 is required for full activity. Phosphorylation of the activation loop at Thr-314 by PDPK1/PDK1 is a prerequisite for full activation. Phosphorylation by mTORC2 at Ser-479 in response to growth factors plays a key role in AKT1 activation by facilitating subsequent phosphorylation of the activation loop by PDPK1/PDK1.

It carries out the reaction L-seryl-[protein] + ATP = O-phospho-L-seryl-[protein] + ADP + H(+). The catalysed reaction is L-threonyl-[protein] + ATP = O-phospho-L-threonyl-[protein] + ADP + H(+). Its activity is regulated as follows. Two specific sites, one in the kinase domain (Thr-314) and the other in the C-terminal regulatory region (Ser-479), need to be phosphorylated for its full activation. Its function is as follows. Akt2-a is one of several closely related serine/threonine-protein kinases known as the AKT kinase, and which regulate many processes including metabolism, proliferation, cell survival, growth and angiogenesis. This is mediated through serine and/or threonine phosphorylation of a range of downstream substrates. Over 100 substrate candidates have been reported so far, but for most of them, no isoform specificity has been reported. May be involved in the inhibition of ciliogenesis. The sequence is that of RAC-beta serine/threonine-protein kinase A (akt2-a) from Xenopus laevis (African clawed frog).